The chain runs to 418 residues: rRNA methyltransferase 3, mitochondrial (418 aa).

The transit peptide at 1-40 directs the protein to the mitochondrion; sequence MAAPAKGMWCSLGSLLRVVQTRDLNARRWVRALRRSPVRV. Residues 41-90 form a disordered region; that stretch reads LSPSGQVEERKRAPDQQPRKAVPKASSQGQRQKQPLETSPSQTPHTWEEA. Residues 47–58 show a composition bias toward basic and acidic residues; it reads VEERKRAPDQQP. Residues 65–85 are compositionally biased toward polar residues; that stretch reads ASSQGQRQKQPLETSPSQTPH. S-adenosyl-L-methionine contacts are provided by Gly354, Ile378, and Leu387.

Belongs to the class IV-like SAM-binding methyltransferase superfamily. RNA methyltransferase TrmH family.

It localises to the mitochondrion. It catalyses the reaction guanosine(1370) in 16S rRNA + S-adenosyl-L-methionine = 2'-O-methylguanosine(1370) in 16S rRNA + S-adenosyl-L-homocysteine + H(+). Functionally, S-adenosyl-L-methionine-dependent 2'-O-ribose methyltransferase that catalyzes the formation of 2'-O-methylguanosine at position 1370 (Gm1370) in the 16S mitochondrial large subunit ribosomal RNA (mtLSU rRNA), a conserved modification in the peptidyl transferase domain of the mtLSU rRNA. Also required for formation of 2'-O-methyluridine at position 1369 (Um1369) mediated by MRM2. The protein is rRNA methyltransferase 3, mitochondrial of Mus musculus (Mouse).